Reading from the N-terminus, the 836-residue chain is Outer membrane usher protein PapC (836 aa).

The N-terminal stretch at 1 to 24 (MKDRIPFAVNNITCVILLSLFCNA) is a signal peptide. Cysteines 814 and 832 form a disulfide.

It belongs to the fimbrial export usher family.

The protein resides in the cell outer membrane. Involved in the export and assembly of pili subunits across the outer membrane. Forms a hexameric ring-shaped pore in the outer bacterial membrane. The 2 nanometer-diameter pore allows the passage of the thin tip fibrillum. As for the rod, it probably unwinds into linear fibers which would therefore be narrow enough to pass through the pore. In Escherichia coli, this protein is Outer membrane usher protein PapC (papC).